The primary structure comprises 902 residues: Protein translocase subunit SecA (902 aa).

ATP-binding positions include glutamine 87, 105-109, and aspartate 512; that span reads GEGKT. The tract at residues 850 to 902 is disordered; it reads RLAKQQQLSHEVTKESQMSAVDGQVASGKKVGRNEPCPCGSGKKYKHCHGKLG. The segment covering 853 to 868 has biased composition (polar residues); that stretch reads KQQQLSHEVTKESQMS. Zn(2+) is bound by residues cysteine 886, cysteine 888, cysteine 897, and histidine 898. The segment covering 892 to 902 has biased composition (basic residues); it reads KKYKHCHGKLG.

It belongs to the SecA family. In terms of assembly, monomer and homodimer. Part of the essential Sec protein translocation apparatus which comprises SecA, SecYEG and auxiliary proteins SecDF-YajC and YidC. The cofactor is Zn(2+).

Its subcellular location is the cell inner membrane. It localises to the cytoplasm. It catalyses the reaction ATP + H2O + cellular proteinSide 1 = ADP + phosphate + cellular proteinSide 2.. In terms of biological role, part of the Sec protein translocase complex. Interacts with the SecYEG preprotein conducting channel. Has a central role in coupling the hydrolysis of ATP to the transfer of proteins into and across the cell membrane, serving both as a receptor for the preprotein-SecB complex and as an ATP-driven molecular motor driving the stepwise translocation of polypeptide chains across the membrane. The polypeptide is Protein translocase subunit SecA (Proteus mirabilis (strain HI4320)).